The sequence spans 313 residues: Extracellular metalloprotease (313 aa).

The signal sequence occupies residues 1–34 (MKLVPRFRKQWFAYLTVLCLALAAAVSFGVPAKA). The interval 35–74 (AENPQTSVSNTGKEADATKNQTSKADQVSAPYEGTGKTSK) is disordered. The propeptide occupies 35-93 (AENPQTSVSNTGKEADATKNQTSKADQVSAPYEGTGKTSKSLYGGQTELEKNIQTLQPS). Over residues 37-60 (NPQTSVSNTGKEADATKNQTSKAD) the composition is skewed to polar residues. C131 and C147 are oxidised to a cystine. Active-site charge relay system residues include H146 and S267.

The protein belongs to the peptidase S1B family. As to quaternary structure, monomer.

The protein resides in the secreted. The protein is Extracellular metalloprotease (mpr) of Bacillus subtilis (strain 168).